We begin with the raw amino-acid sequence, 124 residues long: Small ribosomal subunit protein uS12 (124 aa).

D89 carries the post-translational modification 3-methylthioaspartic acid.

This sequence belongs to the universal ribosomal protein uS12 family. As to quaternary structure, part of the 30S ribosomal subunit. Contacts proteins S8 and S17. May interact with IF1 in the 30S initiation complex.

Functionally, with S4 and S5 plays an important role in translational accuracy. Interacts with and stabilizes bases of the 16S rRNA that are involved in tRNA selection in the A site and with the mRNA backbone. Located at the interface of the 30S and 50S subunits, it traverses the body of the 30S subunit contacting proteins on the other side and probably holding the rRNA structure together. The combined cluster of proteins S8, S12 and S17 appears to hold together the shoulder and platform of the 30S subunit. The polypeptide is Small ribosomal subunit protein uS12 (Proteus mirabilis (strain HI4320)).